Reading from the N-terminus, the 943-residue chain is Receptor-like kinase TMK3 (943 aa).

The signal sequence occupies residues 1–24; sequence MSNSHLGTLCFIISLLGLANFSLS. Residues 25 to 482 lie on the Extracellular side of the membrane; sequence QTGLDDSTMQ…ETSKKSSNVK (458 aa). N41 is a glycosylation site (N-linked (GlcNAc...) asparagine). C54 and C61 form a disulfide bridge. LRR repeat units follow at residues 64–88, 89–111, 112–134, 136–160, 162–183, 186–210, 212–232, 233–254, 255–279, and 281–301; these read SNRV…LQSL, SELV…LSGL, SRLQ…LFSG, SSLQ…VKEA, SLQN…FFGS, LPSL…FAGT, IQSL…LGNM, TSLV…DLSG, LVSL…LVSL, and SLTT…LFGK. N-linked (GlcNAc...) asparagine glycans are attached at residues N165 and N170. Residues N223 and N231 are each glycosylated (N-linked (GlcNAc...) asparagine). An N-linked (GlcNAc...) asparagine glycan is attached at N286. Cystine bridges form between C315/C323 and C353/C361. LRR repeat units follow at residues 363–386, 387–410, and 411–438; these read GGNI…SLAK, LTSL…ELTT, and LSKL…VTLV. N365 is a glycosylation site (N-linked (GlcNAc...) asparagine). Residues 441 to 476 form a disordered region; it reads GNANMGKNGPNKTSDAPGASPGSKPSGGSDGSETSK. An N-linked (GlcNAc...) asparagine glycan is attached at N451. The segment covering 454 to 467 has biased composition (low complexity); sequence SDAPGASPGSKPSG. The helical transmembrane segment at 483–503 threads the bilayer; sequence IIVPVVGGVVGALCLVGLGVC. The Cytoplasmic portion of the chain corresponds to 504 to 943; sequence LYAKKRKRPA…ADSFTSVDGR (440 aa). The segment at 514 to 534 is disordered; the sequence is RVQSPSSNMVIHPHHSGDNDD. One can recognise a Protein kinase domain in the interval 585–866; it reads FSEENILGRG…AHIVNVLSSL (282 aa). ATP-binding positions include 591–599 and K613; that span reads LGRGGFGTV. D714 acts as the Proton acceptor in catalysis. Positions 904-943 are disordered; it reads QTADDSGSSSSAYGSKDNTQTSIPTRPSGFADSFTSVDGR. Over residues 906-918 the composition is skewed to low complexity; that stretch reads ADDSGSSSSAYGS. Over residues 919–928 the composition is skewed to polar residues; that stretch reads KDNTQTSIPT.

This sequence belongs to the protein kinase superfamily. Ser/Thr protein kinase family. Expressed in roots, leaves, stems, siliques and flowers.

The protein localises to the membrane. It catalyses the reaction L-seryl-[protein] + ATP = O-phospho-L-seryl-[protein] + ADP + H(+). The catalysed reaction is L-threonyl-[protein] + ATP = O-phospho-L-threonyl-[protein] + ADP + H(+). In terms of biological role, involved in auxin signal transduction and cell expansion and proliferation regulation. The sequence is that of Receptor-like kinase TMK3 from Arabidopsis thaliana (Mouse-ear cress).